Consider the following 184-residue polypeptide: Inactive cytochrome P450 monooxygenase lolP2 (184 aa).

A helical transmembrane segment spans residues 10–30 (GIVWLTVAAIAISYILQSSFL). Residues 161-184 (RRTRGSRPRSRPRWMPARWSRSSP) are disordered. The span at 163-172 (TRGSRPRSRP) shows a compositional bias: basic residues. Residues 173–184 (RWMPARWSRSSP) are compositionally biased toward low complexity.

This sequence belongs to the cytochrome P450 family.

The protein resides in the membrane. Functionally, cytochrome P450 monooxygenase; part of the gene cluster that mediates the biosynthesis of loline alkaloids, potent insecticidal agents composed of a pyrrolizidine ring system and an uncommon ether bridge linking carbons 2 and 7. Lolines are structurally differentiated by the various modifications of the L-amino group and include norloline, loline, N-methylloline, N-acetylloline, N-acetylnorloline, and N-formylloline. The first committed step is the condensation of O-acetyl-L-homoserine (derived from L-aspartic acid) and L-proline, probably catalyzed by the gamma-type pyridoxal 5'-phosphate(PLP)-dependent enzyme lolC, to give the diamino diacid, NACPP. Ensuing cyclization, decarboxylation, and acetylation steps yield 1-exo-acetamidopyrrolizidine (AcAP). LolO is required for installation of the ether bridge upon the pathway intermediate, 1-exo-acetamidopyrrolizidine (AcAP). In sequential 2-oxoglutarate- and O(2)-consuming steps, lolO removes hydrogens from C2 and C7 of AcAP to form both carbon-oxygen bonds in N-acetylnorloline (NANL), the precursor to all other lolines. The enzymes lolD, lolE, lolF and lolT have also been proposed to be involved in the ether-bridge installation. Further processing of the exocyclic moiety of NANL by fungal N-acetamidase (LolN), methyltransferase (LolM), and cytochrome P450 (LolP) enzymes, with occasional involvement of a plant acetyltransferase, generates the other known lolines. LolN transforms NANL to norlonine which is monomethylated and dimethylated to respectively lonine and N-methyllonine (NML) by lolM. LolP catalyzes hydroxylation of the methyl group in N-methylloline (NML) and further oxygenation to N-formylloline (NFL). A plant acetyltransferase is responsible for the acetylation of loline to form N-acetylloline (NAL). LolA might interact with aspartate kinase to prevent feedback inhibition of its activity by these end products and thereby promote production of L-homoserine from L-aspartate. The chain is Inactive cytochrome P450 monooxygenase lolP2 from Epichloe uncinata (Endophyte fungus).